The primary structure comprises 172 residues: Adenine phosphoribosyltransferase (172 aa).

Belongs to the purine/pyrimidine phosphoribosyltransferase family. Homodimer.

The protein localises to the cytoplasm. The enzyme catalyses AMP + diphosphate = 5-phospho-alpha-D-ribose 1-diphosphate + adenine. It functions in the pathway purine metabolism; AMP biosynthesis via salvage pathway; AMP from adenine: step 1/1. Catalyzes a salvage reaction resulting in the formation of AMP, that is energically less costly than de novo synthesis. The sequence is that of Adenine phosphoribosyltransferase from Anaeromyxobacter dehalogenans (strain 2CP-1 / ATCC BAA-258).